A 290-amino-acid chain; its full sequence is Lectin-related protein (290 aa).

The N-terminal stretch at 1–36 (ANSNSRPHLLQTQKPFSVVLAISITFYLLLLNKVNS) is a signal peptide. N-linked (GlcNAc...) asparagine glycans are attached at residues asparagine 119, asparagine 147, and asparagine 152. Glutamate 161 and aspartate 163 together coordinate Mn(2+). Residues aspartate 163, asparagine 167, and aspartate 170 each contribute to the Ca(2+) site. The Mn(2+) site is built by aspartate 170 and histidine 175.

The protein belongs to the leguminous lectin family. Homotetramer.

Functionally, does not have any carbohydrate binding or agglutination activity. This is Lectin-related protein from Cladrastis kentukea (Yellow wood).